The sequence spans 422 residues: Probable metallocarboxypeptidase A (422 aa).

An N-terminal signal peptide occupies residues 1–17 (MRSVLSLALLAVNVVTA). Residues 18–112 (AVVAPFDYSG…FEAYSAGYAP (95 aa)) constitute a propeptide, activation peptide. Residues 119-419 (SYHSYQDHLS…AGTVAMLKAV (301 aa)) form the Peptidase M14 domain. Zn(2+)-binding residues include His179 and Glu182. Residues 179 to 182 (HARE), Arg237, and 254 to 255 (NR) each bind substrate. The cysteines at positions 248 and 271 are disulfide-linked. His309 is a Zn(2+) binding site. 310-311 (SY) contacts substrate. Catalysis depends on Glu385, which acts as the Proton donor/acceptor.

It belongs to the peptidase M14 family. It depends on Zn(2+) as a cofactor.

The protein localises to the secreted. Its function is as follows. Extracellular metalloprotease that contributes to pathogenicity. In Trichophyton verrucosum (strain HKI 0517), this protein is Probable metallocarboxypeptidase A (MCPA).